The following is a 297-amino-acid chain: Alpha-tubulin N-acetyltransferase 1 (297 aa).

An N-acetyltransferase domain is found at Met1 to Phe186. Acetyl-CoA-binding positions include Phe120–Lys133 and Ser156–Lys165. The tract at residues Leu269–His297 is disordered. Positions Ser287 to His297 are enriched in polar residues.

The protein belongs to the acetyltransferase ATAT1 family.

Its subcellular location is the cytoplasm. The protein localises to the membrane. It is found in the clathrin-coated pit. It localises to the cell junction. The protein resides in the focal adhesion. Its subcellular location is the cell projection. The protein localises to the axon. It is found in the cytoskeleton. It localises to the spindle. The enzyme catalyses L-lysyl-[alpha-tubulin] + acetyl-CoA = N(6)-acetyl-L-lysyl-[alpha-tubulin] + CoA + H(+). Its function is as follows. Specifically acetylates 'Lys-40' in alpha-tubulin on the lumenal side of microtubules. Promotes microtubule destabilization and accelerates microtubule dynamics; this activity may be independent of acetylation activity. Acetylates alpha-tubulin with a slow enzymatic rate, due to a catalytic site that is not optimized for acetyl transfer. Enters the microtubule through each end and diffuses quickly throughout the lumen of microtubules. Acetylates only long/old microtubules because of its slow acetylation rate since it does not have time to act on dynamically unstable microtubules before the enzyme is released. May be involved in neuron development. The polypeptide is Alpha-tubulin N-acetyltransferase 1 (Xenopus tropicalis (Western clawed frog)).